The primary structure comprises 287 residues: Prohibitin-1 (287 aa).

The segment at 102–116 (VLQLPAIYQNLGLDY) is interaction with ATG8. Residues 109 to 112 (YQNL) carry the AIM motif. Residues 180–224 (EFTKAVEQKQIAQQDAERAKFLVEKAEQERQASVIRAEGEAESAE) adopt a coiled-coil conformation. Positions 264–287 (SQHSGGGNSESSGSPNSLLLNIGR) are disordered. Positions 272-287 (SESSGSPNSLLLNIGR) are enriched in low complexity.

The protein belongs to the prohibitin family. As to quaternary structure, the mitochondrial prohibitin complex consists of two subunits (PHB1 and PHB2). The subunits assemble into a membrane-associated ring-shaped supercomplex of approximately 1 mDa. The mitochondrial prohibitin complex interacts with the m-AAA protease, a heterohexamer composed of YTA12/RCA1 and YTA10/AFG3. The mitochondrial prohibitin complex interacts with ATG8 and the interaction may support mitophagosome assembly. In terms of processing, the N-terminus is blocked.

It is found in the mitochondrion inner membrane. Prohibitin probably acts as a holdase/unfoldase for the stabilization of newly synthesized mitochondrial proteins. Involved in mitophagy; may act as an adapter for ATG8 that supports mitophagosome assembly. Negatively regulates the proteolytic processing of ATG32 via the i-AAA protease. Acts as a negative regulator of the m-AAA protease. This is Prohibitin-1 (PHB1) from Saccharomyces cerevisiae (strain ATCC 204508 / S288c) (Baker's yeast).